Consider the following 179-residue polypeptide: Large ribosomal subunit protein uL6 (179 aa).

This sequence belongs to the universal ribosomal protein uL6 family. Part of the 50S ribosomal subunit.

In terms of biological role, this protein binds to the 23S rRNA, and is important in its secondary structure. It is located near the subunit interface in the base of the L7/L12 stalk, and near the tRNA binding site of the peptidyltransferase center. In Chlorobium phaeovibrioides (strain DSM 265 / 1930) (Prosthecochloris vibrioformis (strain DSM 265)), this protein is Large ribosomal subunit protein uL6.